Reading from the N-terminus, the 1083-residue chain is Centrosomal protein of 131 kDa (1083 aa).

2 disordered regions span residues 1 to 155 and 220 to 258; these read MKGT…AGPR and GSES…EVTE. An interaction with PLK4 region spans residues 1-250; the sequence is MKGTRAIGSV…RNNTGGSTGL (250 aa). A phosphoserine mark is found at S14 and S35. Residue S47 is modified to Phosphoserine; by MAPKAPK2. The segment covering 68–87 has biased composition (polar residues); that stretch reads QAINNLRRSNSTTQVSQPRS. Phosphoserine; by MAPKAPK2 and PLK4 is present on S78. 5 positions are modified to phosphoserine: S89, S105, S114, S146, and S150. Positions 138 to 148 are enriched in polar residues; the sequence is LPSNARSSSAL. A compositionally biased stretch (polar residues) spans 232 to 245; the sequence is NVSSATHSARNNTG. One can recognise an IQ domain in the interval 269-289; it reads NQATVTIQRWYRHQVQRRGAG. Residues 301–429 form a disordered region; sequence REEQRQRSGE…PQQPPEDRTQ (129 aa). Basic and acidic residues-rich tracts occupy residues 317-333 and 360-369; these read HQQK…EKAR and GPPENPRETR. S381 carries the post-translational modification Phosphoserine. The residue at position 383 (T383) is a Phosphothreonine. A phosphoserine mark is found at S453, S489, D496, S499, S731, and S798. Over residues 1047 to 1076 the composition is skewed to basic and acidic residues; it reads KEEAVSSLRTQHEAAVKRADHLEELLEQHR. The disordered stretch occupies residues 1047-1083; it reads KEEAVSSLRTQHEAAVKRADHLEELLEQHRRPTPSTK.

This sequence belongs to the CEP131 family. As to quaternary structure, self-associates. Associates with the centriolar satellite BBSome protein complex. Interacts with BBS4; the interaction limits BBS4 availability for association with the BBSome complex, and hence negatively regulates ciliary localization of the BBSome complex. Interacts with MIB1. Interacts with PCM1; the interaction increases in response to ultraviolet light (UV) radiation. Associates with microtubules; association with microtubules is reduced in response to cellular stress, such as UV stimulation, in a process that requires p38 MAP kinase signaling. Interacts with CEP290, DCTN1, PCNT, PCM1 and CEP152. Interacts with 14-3-3 proteins following UV-induced phosphorylation by MAPKAPK2; this inhibits formation of novel centriolar satellites. Interacts with SDCCAG8. Interacts with CCDC61. Interacts with PLK4. In terms of processing, ubiquitinated. Undergoes monoubiquitination catalyzed by the E3 ubiquitin-protein ligase MIB1 in proliferating cells, preventing cilia formation. Monoubiquitination by MIB1 is inhibited in response to cellular stress, such as ultraviolet light (UV) radiation or heat shock, resulting in cilia formation initiation. MAPKAPK2-dependent phosphorylation at Ser-47 and Ser-78 occurs in response to cellular stress such as exposure to ultraviolet irradiation and promotes binding to 14-3-3 proteins which leads to cytoplasmic sequestration of CEP131 and blocks formation of new centriolar satellites. Phosphorylation at Ser-78 mediated by PLK4 is essential for proper organization and integrity of centriolar satellites but is dispensable for its localization to centrioles and its function in ciliogenesis.

Its subcellular location is the cytoplasm. The protein resides in the cytoskeleton. It localises to the microtubule organizing center. It is found in the centrosome. The protein localises to the centriolar satellite. Its subcellular location is the centriole. The protein resides in the cilium basal body. It localises to the cytoplasmic vesicle. It is found in the secretory vesicle. The protein localises to the acrosome. In terms of biological role, component of centriolar satellites contributing to the building of a complex and dynamic network required to regulate cilia/flagellum formation. In proliferating cells, MIB1-mediated ubiquitination induces its sequestration within centriolar satellites, precluding untimely cilia formation initiation. In contrast, during normal and ultraviolet or heat shock cellular stress-induced ciliogenesis, its non-ubiquitinated form is rapidly displaced from centriolar satellites and recruited to centrosome/basal bodies in a microtubule- and p38 MAPK-dependent manner. Also acts as a negative regulator of BBSome ciliary trafficking. Plays a role in sperm flagellar formation; may be involved in the regulation of intraflagellar transport (IFT) and/or intramanchette (IMT) trafficking, which are important for axoneme extension and/or cargo delivery to the nascent sperm tail. Required for optimal cell proliferation and cell cycle progression; may play a role in the regulation of genome stability in non-ciliogenic cells. Involved in centriole duplication. Required for CEP152, WDR62 and CEP63 centrosomal localization and promotes the centrosomal localization of CDK2. Essential for maintaining proper centriolar satellite integrity. The sequence is that of Centrosomal protein of 131 kDa (CEP131) from Homo sapiens (Human).